The chain runs to 251 residues: DNA repair protein RecO (251 aa).

This sequence belongs to the RecO family.

In terms of biological role, involved in DNA repair and RecF pathway recombination. This is DNA repair protein RecO from Macrococcus caseolyticus (strain JCSC5402) (Macrococcoides caseolyticum).